The primary structure comprises 292 residues: Galactinol synthase 2 (292 aa).

Residue Lys-65 is part of the active site. Mn(2+)-binding residues include Asp-81, Asp-83, and His-218.

Belongs to the glycosyltransferase 8 family. Galactosyltransferase subfamily. A divalent metal cation is required as a cofactor. As to expression, present in phloem-associated intermediary cells. Weakly expressed in leaves.

It localises to the cytoplasm. The enzyme catalyses myo-inositol + UDP-alpha-D-galactose = alpha-D-galactosyl-(1-&gt;3)-1D-myo-inositol + UDP + H(+). In terms of biological role, may promote plant stress tolerance. Galactinol synthase mainly involved in the biosynthesis of transport raffinose family oligosaccharides (RFOs) that function as osmoprotectants. This chain is Galactinol synthase 2 (GOLS2), found in Ajuga reptans (Bugle).